The chain runs to 37 residues: Large ribosomal subunit protein bL36 (37 aa).

It belongs to the bacterial ribosomal protein bL36 family.

This Streptomyces avermitilis (strain ATCC 31267 / DSM 46492 / JCM 5070 / NBRC 14893 / NCIMB 12804 / NRRL 8165 / MA-4680) protein is Large ribosomal subunit protein bL36.